The chain runs to 326 residues: Beta-ketoacyl-[acyl-carrier-protein] synthase III (326 aa).

Residues Cys111 and His252 contribute to the active site. Residues 253 to 257 form an ACP-binding region; sequence QANIR. Asn282 is a catalytic residue.

The protein belongs to the thiolase-like superfamily. FabH family. In terms of assembly, homodimer.

The protein localises to the plastid. It localises to the chloroplast. It catalyses the reaction malonyl-[ACP] + acetyl-CoA + H(+) = 3-oxobutanoyl-[ACP] + CO2 + CoA. Its pathway is lipid metabolism; fatty acid biosynthesis. Catalyzes the condensation reaction of fatty acid synthesis by the addition to an acyl acceptor of two carbons from malonyl-ACP. Catalyzes the first condensation reaction which initiates fatty acid synthesis and may therefore play a role in governing the total rate of fatty acid production. Possesses both acetoacetyl-ACP synthase and acetyl transacylase activities. Its substrate specificity determines the biosynthesis of branched-chain and/or straight-chain of fatty acids. In Porphyra umbilicalis (Purple laver), this protein is Beta-ketoacyl-[acyl-carrier-protein] synthase III.